The sequence spans 272 residues: 3-methyl-2-oxobutanoate hydroxymethyltransferase (272 aa).

Mg(2+) is bound by residues D51 and D90. 3-methyl-2-oxobutanoate-binding positions include 51-52 (DS), D90, and K119. E121 serves as a coordination point for Mg(2+). E188 serves as the catalytic Proton acceptor.

Belongs to the PanB family. Homodecamer; pentamer of dimers. It depends on Mg(2+) as a cofactor.

It is found in the cytoplasm. It carries out the reaction 3-methyl-2-oxobutanoate + (6R)-5,10-methylene-5,6,7,8-tetrahydrofolate + H2O = 2-dehydropantoate + (6S)-5,6,7,8-tetrahydrofolate. The protein operates within cofactor biosynthesis; (R)-pantothenate biosynthesis; (R)-pantoate from 3-methyl-2-oxobutanoate: step 1/2. Catalyzes the reversible reaction in which hydroxymethyl group from 5,10-methylenetetrahydrofolate is transferred onto alpha-ketoisovalerate to form ketopantoate. This chain is 3-methyl-2-oxobutanoate hydroxymethyltransferase, found in Dechloromonas aromatica (strain RCB).